We begin with the raw amino-acid sequence, 196 residues long: Ribosome maturation factor RimP (196 aa).

The tract at residues L164–E196 is disordered. A compositionally biased stretch (basic residues) spans G173–K182.

The protein belongs to the RimP family.

The protein resides in the cytoplasm. Required for maturation of 30S ribosomal subunits. The polypeptide is Ribosome maturation factor RimP (Xanthomonas euvesicatoria pv. vesicatoria (strain 85-10) (Xanthomonas campestris pv. vesicatoria)).